Reading from the N-terminus, the 428-residue chain is Histidine--tRNA ligase (428 aa).

This sequence belongs to the class-II aminoacyl-tRNA synthetase family.

The protein resides in the cytoplasm. The catalysed reaction is tRNA(His) + L-histidine + ATP = L-histidyl-tRNA(His) + AMP + diphosphate + H(+). The protein is Histidine--tRNA ligase of Korarchaeum cryptofilum (strain OPF8).